The sequence spans 370 residues: Alanine racemase (370 aa).

Lysine 36 acts as the Proton acceptor; specific for D-alanine in catalysis. Lysine 36 carries the post-translational modification N6-(pyridoxal phosphate)lysine. Position 134 (arginine 134) interacts with substrate. Residue tyrosine 265 is the Proton acceptor; specific for L-alanine of the active site. Methionine 313 lines the substrate pocket.

Belongs to the alanine racemase family. It depends on pyridoxal 5'-phosphate as a cofactor.

The enzyme catalyses L-alanine = D-alanine. It functions in the pathway amino-acid biosynthesis; D-alanine biosynthesis; D-alanine from L-alanine: step 1/1. Functionally, catalyzes the interconversion of L-alanine and D-alanine. May also act on other amino acids. This is Alanine racemase (alr) from Desulforamulus reducens (strain ATCC BAA-1160 / DSM 100696 / MI-1) (Desulfotomaculum reducens).